The primary structure comprises 1004 residues: Ephrin type-A receptor 8 (1004 aa).

The signal sequence occupies residues M1–A26. Residues G27–T541 lie on the Extracellular side of the membrane. In terms of domain architecture, Eph LBD spans E30–R208. Fibronectin type-III domains follow at residues P327–A437 and A438–P533. 3 N-linked (GlcNAc...) asparagine glycosylation sites follow: N339, N406, and N431. The chain crosses the membrane as a helical span at residues I542–C562. The tract at residues K563–Y569 is mediates interaction with ANKS1A and ANKS1B. Residues K563 to L1004 lie on the Cytoplasmic side of the membrane. Residues A588–G643 form a mediates interaction with PIK3CG and required for endocytosis region. Residue Y615 is modified to Phosphotyrosine; by autocatalysis. A Protein kinase domain is found at I634–V895. ATP is bound by residues I640–V648 and K666. The active-site Proton acceptor is D759. Position 838 is a phosphotyrosine; by autocatalysis (Y838). The SAM domain occupies N929–Q993. Positions R1002–L1004 match the PDZ-binding motif.

The protein belongs to the protein kinase superfamily. Tyr protein kinase family. Ephrin receptor subfamily. In terms of assembly, heterotetramer upon binding of the ligand. The heterotetramer is composed of an ephrin dimer and a receptor dimer. Oligomerization is probably required to induce biological responses. May also form heterodimers with other ephrin receptors. Interacts with FYN; possible downstream effector of EPHA8 in regulation of cell adhesion. Interacts with PIK3CG; regulates integrin-mediated cell adhesion to substrate. Interacts with TIAM1; regulates clathrin-mediated endocytosis of EPHA8. Interacts with ANKS1A and ANKS1B; EPHA8 kinase activity-independent but stimulated by EPHA8 ubiquitination. Phosphorylated. Phosphorylation is stimulated upon binding of its ligands including EFNA2, EFNA3 and EFNA5. Autophosphorylation on Tyr-615 is critical for association with FYN. Autophosphorylation on Tyr-838 modulates tyrosine kinase activity. In terms of processing, ubiquitinated. Ubiquitination by CBL regulates the receptor stability and activity through proteasomal degradation. ANKS1A prevents ubiquitination and degradation. In terms of tissue distribution, specifically expressed in the central nervous system.

It localises to the cell membrane. It is found in the cell projection. The protein resides in the early endosome membrane. The catalysed reaction is L-tyrosyl-[protein] + ATP = O-phospho-L-tyrosyl-[protein] + ADP + H(+). Its function is as follows. Receptor tyrosine kinase which binds promiscuously GPI-anchored ephrin-A family ligands residing on adjacent cells, leading to contact-dependent bidirectional signaling into neighboring cells. The signaling pathway downstream of the receptor is referred to as forward signaling while the signaling pathway downstream of the ephrin ligand is referred to as reverse signaling. The GPI-anchored ephrin-A EFNA2, EFNA3, and EFNA5 are able to activate EPHA8 through phosphorylation. With EFNA5 may regulate integrin-mediated cell adhesion and migration on fibronectin substrate but also neurite outgrowth. During development of the nervous system also plays a role in axon guidance. Downstream effectors of the EPHA8 signaling pathway include FYN which promotes cell adhesion upon activation by EPHA8 and the MAP kinases in the stimulation of neurite outgrowth. This is Ephrin type-A receptor 8 (Epha8) from Mus musculus (Mouse).